The primary structure comprises 364 residues: Putative agmatine deiminase (364 aa).

Cys-355 (amidino-cysteine intermediate) is an active-site residue.

Belongs to the agmatine deiminase family.

The catalysed reaction is agmatine + H2O = N-carbamoylputrescine + NH4(+). This Mycoplasma capricolum subsp. capricolum (strain California kid / ATCC 27343 / NCTC 10154) protein is Putative agmatine deiminase.